The chain runs to 350 residues: Secreted effector protein PipB2 (350 aa).

Pentapeptide repeat domains are found at residues 162-201 (ANLTAENLCDADLSGANLEGAVLFMADCEGANFKGANLSG), 202-241 (TSLGDSNFKNACLEDGIMCGATLDHANLTGANLQHASLLG), 247-286 (CNCSGANMDHTNLSGATLIRADMSGATLQGATIMAAIMED), and 287-326 (AVLTRANLRKASFISTNLDGADLAEANLNNTCFKDCTLTH).

Interacts with the host kinesin light chain (KLC), a subunit of the kinesin-1 motor complex.

The protein resides in the secreted. It is found in the host membrane. Functionally, effector proteins function to alter host cell physiology and promote bacterial survival in host tissues. Involved in the reorganization of late endosome/lysosome (LE/Lys) compartments in mammalian cells. Necessary and sufficient to link kinesin-1 onto the Salmonella-containing vacuole (SCV) membrane. Required for centrifugal extension of lysosomal glycoprotein-rich membrane tubules, known as Salmonella-induced filaments (Sifs), away from the SCV and toward the cell periphery. Required for virulence, but not for intracellular survival and replication in phagocytic cells. In Salmonella paratyphi A (strain ATCC 9150 / SARB42), this protein is Secreted effector protein PipB2 (pipB2).